Reading from the N-terminus, the 354-residue chain is MMKKLLLVATLMAGAAQATAAEKLYLFNWNDYIAEDTLKRFEQQCGCELVQEFYSGTEEMMAKLAAGASGYDVIIPTQNAVEALIRKGDLLELDKSRLANLSNEAAGYLDKDFDKGNRYSLPYAFTTTLVGYNKTELDKLGIDPADWSVIFDPAVLEKIKGRVTVMDDPQELFGAALKYLGHSANDTDPQHWKEAQALILAAKPYWAAFNSSSYIKELTLGNIWVAHGYSSDMYQARADAEAAGRAFKVDFALPRQGAVLAIDNMVIHKGSKNPDLAYRFIDFMLDGRNASELTNQIGTGTPNAAALPFIKPEIKTLAALFPDATTQARLEPLKDLNSRQRRALNKLWTEIKLR.

An N-terminal signal peptide occupies residues 1–20 (MMKKLLLVATLMAGAAQATA).

The protein belongs to the bacterial solute-binding protein 1 family.

It localises to the periplasm. In terms of biological role, binds putrescine and cadaverine. This chain is Putrescine/cadaverine-binding protein, found in Pseudomonas aeruginosa (strain ATCC 15692 / DSM 22644 / CIP 104116 / JCM 14847 / LMG 12228 / 1C / PRS 101 / PAO1).